A 486-amino-acid chain; its full sequence is uncharacterized protein (486 aa).

LRR repeat units follow at residues 18–39 (NLKK…KKLV), 43–59 (ELHI…NIPE), 60–81 (NIKS…TKLK), 82–103 (NITY…ILPH), 104–125 (SIEF…NNLV), 126–147 (NLKK…FPIS), 148–168 (IVEL…EKLI), 169–190 (NLKK…IKFP), and 198–219 (DYQS…IEYE).

This is an uncharacterized protein from Amsacta moorei entomopoxvirus (AmEPV).